The primary structure comprises 390 residues: GTP 3',8-cyclase, mitochondrial (390 aa).

The N-terminal 45 residues, 1-45, are a transit peptide targeting the mitochondrion; the sequence is MRRCFSKITDCHLGFKNSNFLLVGSEVGSGSVTRTITTTTSERLF. In terms of domain architecture, Radical SAM core spans 69 to 290; sequence KFGRLHTYLR…PSIKRMQDHP (222 aa). Position 78 (R78) interacts with GTP. Residues C85 and C89 each coordinate [4Fe-4S] cluster. Y91 provides a ligand contact to S-adenosyl-L-methionine. Position 92 (C92) interacts with [4Fe-4S] cluster. R128 is a binding site for GTP. G132 is a binding site for S-adenosyl-L-methionine. GTP is bound at residue T159. S183 serves as a coordination point for S-adenosyl-L-methionine. Residue K220 participates in GTP binding. M254 provides a ligand contact to S-adenosyl-L-methionine. Positions 317 and 320 each coordinate [4Fe-4S] cluster. 322-324 provides a ligand contact to GTP; the sequence is RLR. C334 provides a ligand contact to [4Fe-4S] cluster.

It belongs to the radical SAM superfamily. MoaA family. As to quaternary structure, homodimer. Requires [4Fe-4S] cluster as cofactor. As to expression, expressed in all organs, with an abundant expression in the roots.

The protein resides in the mitochondrion matrix. It catalyses the reaction GTP + AH2 + S-adenosyl-L-methionine = (8S)-3',8-cyclo-7,8-dihydroguanosine 5'-triphosphate + 5'-deoxyadenosine + L-methionine + A + H(+). It functions in the pathway cofactor biosynthesis; molybdopterin biosynthesis. Functionally, catalyzes the cyclization of GTP to (8S)-3',8-cyclo-7,8-dihydroguanosine 5'-triphosphate. This is GTP 3',8-cyclase, mitochondrial (CNX2) from Arabidopsis thaliana (Mouse-ear cress).